A 39-amino-acid polypeptide reads, in one-letter code: Sarcotoxin-1C (39 aa).

Arginine 39 bears the Arginine amide mark.

This sequence belongs to the cecropin family.

Its subcellular location is the secreted. In terms of biological role, sarcotoxins, which are potent bactericidal proteins, are produced in response to injury. They are cytotoxic to both Gram-positive and Gram-negative bacteria. The polypeptide is Sarcotoxin-1C (Sarcophaga peregrina (Flesh fly)).